A 223-amino-acid chain; its full sequence is Large ribosomal subunit protein uL4c (223 aa).

Residues Thr61–Gly96 are disordered.

The protein belongs to the universal ribosomal protein uL4 family. In terms of assembly, part of the 50S ribosomal subunit.

Its subcellular location is the plastid. It localises to the chloroplast. Its function is as follows. Probably binds the 23S rRNA. This chain is Large ribosomal subunit protein uL4c (rpl4), found in Guillardia theta (Cryptophyte).